The following is a 145-amino-acid chain: Protein SprT-like (145 aa).

The SprT-like domain maps to 4–140 (TNYVQEVSLA…VCGNCHGKLI (137 aa)). Residue histidine 64 coordinates Zn(2+). Residue glutamate 65 is part of the active site. Histidine 68 lines the Zn(2+) pocket.

This sequence belongs to the SprT family. Zn(2+) serves as cofactor.

It is found in the cytoplasm. The chain is Protein SprT-like from Streptococcus pyogenes serotype M6 (strain ATCC BAA-946 / MGAS10394).